Consider the following 427-residue polypeptide: Enolase (427 aa).

Residue glutamine 163 participates in (2R)-2-phosphoglycerate binding. Glutamate 205 (proton donor) is an active-site residue. Mg(2+) contacts are provided by aspartate 242, glutamate 285, and aspartate 312. The (2R)-2-phosphoglycerate site is built by lysine 337, arginine 366, serine 367, and lysine 388. The active-site Proton acceptor is the lysine 337.

The protein belongs to the enolase family. The cofactor is Mg(2+).

It localises to the cytoplasm. The protein localises to the secreted. Its subcellular location is the cell surface. The enzyme catalyses (2R)-2-phosphoglycerate = phosphoenolpyruvate + H2O. It participates in carbohydrate degradation; glycolysis; pyruvate from D-glyceraldehyde 3-phosphate: step 4/5. Its function is as follows. Catalyzes the reversible conversion of 2-phosphoglycerate (2-PG) into phosphoenolpyruvate (PEP). It is essential for the degradation of carbohydrates via glycolysis. The polypeptide is Enolase (Rhodopseudomonas palustris (strain TIE-1)).